We begin with the raw amino-acid sequence, 124 residues long: Max-like protein 1 (124 aa).

Residues 1–10 (MSDMSDLEDD) are compositionally biased toward acidic residues. The interval 1-44 (MSDMSDLEDDQTGHCGSGEHSGPFDPKRHAREQHNALERRRRDN) is disordered. Positions 29–42 (HAREQHNALERRRR) are basic motif. The bHLH domain occupies 29-82 (HAREQHNALERRRRDNIKDMYTSLREVVPDANGERVQASRAVILKKAIESIEKG). Residues 32–44 (EQHNALERRRRDN) show a composition bias toward basic and acidic residues. Residues 43–82 (DNIKDMYTSLREVVPDANGERVQASRAVILKKAIESIEKG) form a helix-loop-helix motif region. Residues 86–113 (SATLSVDVAEQESKNAKLREEIARLKAK) are a coiled coil.

This sequence belongs to the MAX family. Heterodimer with mdl-1 in presence and absence of DNA. Interacts with tdpt-1; the interaction promotes axon regeneration after injury. Expressed in D-type motor neurons.

Its subcellular location is the nucleus. Its function is as follows. Transcriptional regulator which binds to the E box motif 5'-CACGTG-3', when in a heterodimeric complex with mdl-1. Involved in the control of lifespan in response to dietary restriction, the decline in protein homeostasis associated with normal aging and may overlap with the insulin-like signaling pathway. Involved in promoting infection by the microsporidian pathogen N.parisii. Required for the expression of svh-2 and the promotion of axon regeneration after injury. This chain is Max-like protein 1, found in Caenorhabditis elegans.